The sequence spans 105 residues: Heat shock protein HspQ (105 aa).

Residues 74-105 (SSETQDEHPEQPSMDELARTIRKQLQAPRLRN) are disordered.

It belongs to the HspQ family.

The protein resides in the cytoplasm. Its function is as follows. Involved in the degradation of certain denaturated proteins, including DnaA, during heat shock stress. This Citrobacter koseri (strain ATCC BAA-895 / CDC 4225-83 / SGSC4696) protein is Heat shock protein HspQ.